Reading from the N-terminus, the 191-residue chain is Large ribosomal subunit protein uL6B (191 aa).

This sequence belongs to the universal ribosomal protein uL6 family. Component of the large ribosomal subunit (LSU). Mature yeast ribosomes consist of a small (40S) and a large (60S) subunit. The 40S small subunit contains 1 molecule of ribosomal RNA (18S rRNA) and 33 different proteins (encoded by 57 genes). The large 60S subunit contains 3 rRNA molecules (25S, 5.8S and 5S rRNA) and 46 different proteins (encoded by 81 genes).

The protein resides in the cytoplasm. Functionally, component of the ribosome, a large ribonucleoprotein complex responsible for the synthesis of proteins in the cell. The small ribosomal subunit (SSU) binds messenger RNAs (mRNAs) and translates the encoded message by selecting cognate aminoacyl-transfer RNA (tRNA) molecules. The large subunit (LSU) contains the ribosomal catalytic site termed the peptidyl transferase center (PTC), which catalyzes the formation of peptide bonds, thereby polymerizing the amino acids delivered by tRNAs into a polypeptide chain. The nascent polypeptides leave the ribosome through a tunnel in the LSU and interact with protein factors that function in enzymatic processing, targeting, and the membrane insertion of nascent chains at the exit of the ribosomal tunnel. The chain is Large ribosomal subunit protein uL6B from Saccharomyces cerevisiae (strain ATCC 204508 / S288c) (Baker's yeast).